Reading from the N-terminus, the 302-residue chain is GTPase Era (302 aa).

The 169-residue stretch at 10 to 178 folds into the Era-type G domain; the sequence is RCGYVAIVGR…EAQIAKHLPE (169 aa). The interval 18 to 25 is G1; it reads GRPNVGKS. A GTP-binding site is contributed by 18–25; that stretch reads GRPNVGKS. Residues 44-48 form a G2 region; sequence QTTRH. The interval 65-68 is G3; the sequence is DTPG. GTP-binding positions include 65–69 and 127–130; these read DTPGM and NKTD. The G4 stretch occupies residues 127–130; that stretch reads NKTD. A G5 region spans residues 157–159; that stretch reads ISA. The KH type-2 domain occupies 201 to 285; it reads VREKIMRQLG…MLNLWVKVKG (85 aa).

The protein belongs to the TRAFAC class TrmE-Era-EngA-EngB-Septin-like GTPase superfamily. Era GTPase family. As to quaternary structure, monomer.

It is found in the cytoplasm. The protein localises to the cell inner membrane. Functionally, an essential GTPase that binds both GDP and GTP, with rapid nucleotide exchange. Plays a role in 16S rRNA processing and 30S ribosomal subunit biogenesis and possibly also in cell cycle regulation and energy metabolism. The sequence is that of GTPase Era from Pseudomonas putida (strain ATCC 47054 / DSM 6125 / CFBP 8728 / NCIMB 11950 / KT2440).